We begin with the raw amino-acid sequence, 598 residues long: Nuclear receptor subfamily 4 group A member 1 (598 aa).

Disordered stretches follow at residues 1 to 43 (MPCI…PEAA) and 128 to 151 (GSDY…PPQL). Residues 134–145 (SPCSAPSPSTPS) show a composition bias toward low complexity. The interval 171-466 (RAWTEQLPKA…PAEGKLIFCS (296 aa)) is required for nuclear import. The nuclear receptor DNA-binding region spans 264 to 339 (EGRCAVCGDN…VGMVKEVVRT (76 aa)). 2 NR C4-type zinc fingers span residues 267 to 287 (CAVC…CEGC) and 303 to 327 (CLAN…FQKC). Positions 268–354 (AVCGDNASCQ…RRGRLPSKPK (87 aa)) are required for binding NBRE-containing DNA. Residues 299-361 (AKYICLANKD…KPKQPPETSP (63 aa)) form a required for the interaction with RXRA region. S341 bears the Phosphoserine; by PKA mark. Positions 341 to 361 (SLKGRRGRLPSKPKQPPETSP) are disordered. S351 carries the post-translational modification Phosphoserine; by PKA, RPS6KA1 and RPS6KA3. An NR LBD domain is found at 360-595 (SPAHLLTSLV…PIVDKIFMDT (236 aa)). Positions 521–544 (PRRVEELQNRIASCLKEHVSAEAG) are binds lipopolysaccharide. The AF-2 stretch occupies residues 584–595 (PPPIVDKIFMDT).

Belongs to the nuclear hormone receptor family. NR4 subfamily. As to quaternary structure, binds the NGFI-B response element (NBRE) as a monomer. Binds the Nur response element (NurRE), consisting of two inverse NBRE-related octanucleotide repeats separated by 6 base-pairs, as a dimer. Interacts (via N-terminus) with NLRP3 (via LRR repeat domain); the interaction is direct, requires binding of NR4A1/Nur77 to NBRE-containing dsDNA and lipopolysaccharide, and leads to non-canonical NLRP3 inflammasome activation. Interacts with GADD45GIP1. Interacts with STK11. Interacts with IFI27. Heterodimer (via DNA-binding domain) with RXRA (via C-terminus); DNA-binding of the heterodimer is enhanced by 9-cis retinoic acid. Competes for the RXRA interaction with EP300 and thereby attenuates EP300 mediated acetylation of RXRA. Interacts with NCOA1. Interacts with NCOA2. Interacts with NCOA3. It depends on Zn(2+) as a cofactor. In terms of processing, phosphorylated at Ser-351 by RPS6KA1 and RPS6KA3 in response to mitogenic or stress stimuli. Acetylated by p300/CBP, acetylation increases stability. Deacetylated by HDAC1.

Its subcellular location is the nucleus. The protein resides in the cytoplasm. The protein localises to the cytosol. It is found in the mitochondrion. Its function is as follows. Orphan nuclear receptor. Binds the NGFI-B response element (NBRE) 5'-AAAGGTCA-3'. Binds 9-cis-retinoic acid outside of its ligand-binding (NR LBD) domain. Participates in energy homeostasis by sequestrating the kinase STK11 in the nucleus, thereby attenuating cytoplasmic AMPK activation. Regulates the inflammatory response in macrophages by regulating metabolic adaptations during inflammation, including repressing the transcription of genes involved in the citric acid cycle (TCA). Inhibits NF-kappa-B signaling by binding to low-affinity NF-kappa-B binding sites, such as at the IL2 promoter. May act concomitantly with NR4A2 in regulating the expression of delayed-early genes during liver regeneration. Plays a role in the vascular response to injury. Functionally, in the cytosol, upon its detection of both bacterial lipopolysaccharide (LPS) and NBRE-containing mitochondrial DNA released by GSDMD pores during pyroptosis, it promotes non-canonical NLRP3 inflammasome activation by stimulating association of NLRP3 and NEK7. This is Nuclear receptor subfamily 4 group A member 1 (NR4A1) from Bos taurus (Bovine).